The chain runs to 454 residues: Transcription factor efuD (454 aa).

The 108-residue stretch at 4–111 (AKELIRITAR…NYHRAIDSIK (108 aa)) folds into the HTH TFE/IIEalpha-type domain. Residues 327–454 (LRTDDDGAMD…DEDELEFEDI (128 aa)) are disordered. Positions 353 to 372 (DQDEEEEEEDDDDDEFEDVD) are enriched in acidic residues. Over residues 387-401 (SVSTPATSAQVSSTA) the composition is skewed to polar residues. Low complexity predominate over residues 423–437 (APAAAASSQAAAAES). Positions 442 to 454 (SDEDEDELEFEDI) are enriched in acidic residues.

Belongs to the TFIIE alpha subunit family.

The protein resides in the nucleus. In terms of biological role, transcription factor; part of the gene cluster that mediates the biosynthesis of enfumafungin, a glycosylated fernene-type triterpenoid with potent antifungal activity, mediated by its interaction with beta-1,3-glucan synthase and the fungal cell wall. Is possibly responsible for the transcription regulation of one or more genes within the gene cluster. This Hormonema carpetanum protein is Transcription factor efuD.